Reading from the N-terminus, the 291-residue chain is Probable aquaporin PIP2-4 (291 aa).

The residue at position 1 (Met-1) is an N-acetylmethionine. The interval 1 to 22 (MAKDLDVNESGPPAARDYKDPP) is disordered. The residue at position 2 (Ala-2) is an N-acetylalanine; in Probable aquaporin PIP2-4, N-terminally processed. Topologically, residues 2 to 39 (AKDLDVNESGPPAARDYKDPPPAPFFDMEELRKWPLYR) are cytoplasmic. An N6,N6-dimethyllysine modification is found at Lys-3. Residues 40–60 (AVIAEFVATLLFLYVSILTVI) form a helical membrane-spanning segment. At 61–74 (GYKAQTDATAGGVD) the chain is on the extracellular side. Residues 75–95 (CGGVGILGIAWAFGGMIFVLV) traverse the membrane as a helical segment. Topologically, residues 96-125 (YCTAGISGGHINPAVTVGLFLARKVSLVRT) are cytoplasmic. Residues 107-109 (NPA) carry the NPA 1 motif. The helical transmembrane segment at 126-146 (VLYIVAQCLGAICGCGFVKAF) threads the bilayer. The Extracellular portion of the chain corresponds to 147 to 167 (QSSYYTRYGGGANELADGYNK). A helical transmembrane segment spans residues 168–188 (GTGLGAEIIGTFVLVYTVFSA). Over 189–201 (TDPKRNARDSHVP) the chain is Cytoplasmic. A helical transmembrane segment spans residues 202 to 222 (VLAPLPIGFAVFMVHLATIPI). Topologically, residues 223 to 249 (TGTGINPARSFGAAVIYNNEKAWDDQW) are extracellular. An NPA 2 motif is present at residues 228-230 (NPA). Residues 250 to 270 (IFWVGPMIGAAAAAFYHQFIL) form a helical membrane-spanning segment. Over 271–291 (RAAAIKALGSFGSFGSFRSFA) the chain is Cytoplasmic. Residues Ser-283, Ser-286, and Ser-289 each carry the phosphoserine modification.

This sequence belongs to the MIP/aquaporin (TC 1.A.8) family. PIP (TC 1.A.8.11) subfamily. As to expression, expressed in roots.

It localises to the cell membrane. Aquaporins facilitate the transport of water and small neutral solutes across cell membranes. This chain is Probable aquaporin PIP2-4 (PIP2-4), found in Arabidopsis thaliana (Mouse-ear cress).